A 417-amino-acid chain; its full sequence is Tyrosine--tRNA ligase (417 aa).

Y39 is a binding site for L-tyrosine. The short motif at C44–N53 is the 'HIGH' region element. Residues Y176 and Q180 each contribute to the L-tyrosine site. The 'KMSKS' region motif lies at K236–T240. K239 provides a ligand contact to ATP. Residues F350 to A417 enclose the S4 RNA-binding domain.

It belongs to the class-I aminoacyl-tRNA synthetase family. TyrS type 1 subfamily. In terms of assembly, homodimer.

It is found in the cytoplasm. The catalysed reaction is tRNA(Tyr) + L-tyrosine + ATP = L-tyrosyl-tRNA(Tyr) + AMP + diphosphate + H(+). Catalyzes the attachment of tyrosine to tRNA(Tyr) in a two-step reaction: tyrosine is first activated by ATP to form Tyr-AMP and then transferred to the acceptor end of tRNA(Tyr). The sequence is that of Tyrosine--tRNA ligase from Bradyrhizobium diazoefficiens (strain JCM 10833 / BCRC 13528 / IAM 13628 / NBRC 14792 / USDA 110).